The chain runs to 309 residues: Homoserine kinase (309 aa).

91-101 serves as a coordination point for ATP; it reads PIGSGLGSSAC.

Belongs to the GHMP kinase family. Homoserine kinase subfamily.

It is found in the cytoplasm. It carries out the reaction L-homoserine + ATP = O-phospho-L-homoserine + ADP + H(+). It functions in the pathway amino-acid biosynthesis; L-threonine biosynthesis; L-threonine from L-aspartate: step 4/5. In terms of biological role, catalyzes the ATP-dependent phosphorylation of L-homoserine to L-homoserine phosphate. The protein is Homoserine kinase of Buchnera aphidicola subsp. Acyrthosiphon pisum (strain 5A).